The sequence spans 425 residues: Light-independent protochlorophyllide reductase subunit N (425 aa).

Residues C17, C42, and C103 each contribute to the [4Fe-4S] cluster site.

The protein belongs to the BchN/ChlN family. Protochlorophyllide reductase is composed of three subunits; ChlL, ChlN and ChlB. Forms a heterotetramer of two ChlB and two ChlN subunits. Requires [4Fe-4S] cluster as cofactor.

The enzyme catalyses chlorophyllide a + oxidized 2[4Fe-4S]-[ferredoxin] + 2 ADP + 2 phosphate = protochlorophyllide a + reduced 2[4Fe-4S]-[ferredoxin] + 2 ATP + 2 H2O. It participates in porphyrin-containing compound metabolism; chlorophyll biosynthesis (light-independent). Its function is as follows. Component of the dark-operative protochlorophyllide reductase (DPOR) that uses Mg-ATP and reduced ferredoxin to reduce ring D of protochlorophyllide (Pchlide) to form chlorophyllide a (Chlide). This reaction is light-independent. The NB-protein (ChlN-ChlB) is the catalytic component of the complex. This Synechococcus sp. (strain CC9605) protein is Light-independent protochlorophyllide reductase subunit N.